The following is a 198-amino-acid chain: Clytin (198 aa).

Positions 1–9 are excised as a propeptide; sequence MADTASKYA. 4 consecutive EF-hand domains span residues 20 to 55, 60 to 95, 119 to 148, and 149 to 184; these read KWVN…DICA, TPEQ…VDGW, EAVF…SGIC, and SSDE…FWYT. The Ca(2+) site is built by Asp-33, Asn-35, Asp-37, Lys-39, and Glu-44. The Ca(2+) site is built by Asp-126, Asp-128, Ser-130, Ser-132, Glu-137, Asp-162, Asp-164, Ser-166, Lys-168, and Glu-173.

This sequence belongs to the aequorin family.

Ca(2+)-dependent bioluminescence photoprotein. Displays an emission peak at 470 nm (blue light). Trace amounts of calcium ion trigger the intramolecular oxidation of the chromophore, coelenterazine into coelenteramide and CO(2) with the concomitant emission of light. The chain is Clytin from Clytia gregaria (Gregarious jellyfish).